Reading from the N-terminus, the 314-residue chain is Secreted frizzled-related protein 1 (314 aa).

The first 31 residues, 1-31, serve as a signal peptide directing secretion; that stretch reads MGIGRSEGGRRGAALGVLLALGAALLAVGSA. In terms of domain architecture, FZ spans 53–169; sequence TKPPQCVDIP…FPEGDVCIAM (117 aa). 5 disulfides stabilise this stretch: C58–C121, C68–C114, C105–C140, C129–C166, and C133–C157. N-linked (GlcNAc...) asparagine glycosylation is present at N173. 3 cysteine pairs are disulfide-bonded: C186–C256, C189–C258, and C203–C306. An NTR domain is found at 186–306; it reads CPPCDNELKS…FMKKMKNHEC (121 aa).

This sequence belongs to the secreted frizzled-related protein (sFRP) family. Interacts with WNT1, WNT2 and FRZD6. Interacts with WNT4, WNT8 and MYOC. Widely expressed. Absent from lung, liver and peripheral blood leukocytes. Highest levels in heart and fetal kidney. Also expressed in testis, ovary, fetal brain and lung, leiomyomal cells, myometrial cells and vascular smooth muscle cells. Expressed in foreskin fibroblasts and in keratinocytes.

The protein localises to the secreted. Its function is as follows. Soluble frizzled-related proteins (sFRPS) function as modulators of Wnt signaling through direct interaction with Wnts. They have a role in regulating cell growth and differentiation in specific cell types. SFRP1 decreases intracellular beta-catenin levels. Has antiproliferative effects on vascular cells, in vitro and in vivo, and can induce, in vivo, an angiogenic response. In vascular cell cycle, delays the G1 phase and entry into the S phase. In kidney development, inhibits tubule formation and bud growth in metanephroi. Inhibits WNT1/WNT4-mediated TCF-dependent transcription. This chain is Secreted frizzled-related protein 1 (SFRP1), found in Homo sapiens (Human).